The chain runs to 345 residues: S-adenosylmethionine:tRNA ribosyltransferase-isomerase (345 aa).

It belongs to the QueA family. In terms of assembly, monomer.

It is found in the cytoplasm. The enzyme catalyses 7-aminomethyl-7-carbaguanosine(34) in tRNA + S-adenosyl-L-methionine = epoxyqueuosine(34) in tRNA + adenine + L-methionine + 2 H(+). The protein operates within tRNA modification; tRNA-queuosine biosynthesis. Transfers and isomerizes the ribose moiety from AdoMet to the 7-aminomethyl group of 7-deazaguanine (preQ1-tRNA) to give epoxyqueuosine (oQ-tRNA). This is S-adenosylmethionine:tRNA ribosyltransferase-isomerase from Alkalilimnicola ehrlichii (strain ATCC BAA-1101 / DSM 17681 / MLHE-1).